A 428-amino-acid polypeptide reads, in one-letter code: Enolase (428 aa).

Gln-164 contributes to the (2R)-2-phosphoglycerate binding site. Catalysis depends on Glu-206, which acts as the Proton donor. Asp-243, Glu-286, and Asp-313 together coordinate Mg(2+). (2R)-2-phosphoglycerate is bound by residues Lys-338, Arg-367, Ser-368, and Lys-389. Lys-338 functions as the Proton acceptor in the catalytic mechanism.

The protein belongs to the enolase family. Requires Mg(2+) as cofactor.

It localises to the cytoplasm. Its subcellular location is the secreted. It is found in the cell surface. The enzyme catalyses (2R)-2-phosphoglycerate = phosphoenolpyruvate + H2O. It participates in carbohydrate degradation; glycolysis; pyruvate from D-glyceraldehyde 3-phosphate: step 4/5. Its function is as follows. Catalyzes the reversible conversion of 2-phosphoglycerate (2-PG) into phosphoenolpyruvate (PEP). It is essential for the degradation of carbohydrates via glycolysis. This is Enolase from Dehalococcoides mccartyi (strain ATCC BAA-2100 / JCM 16839 / KCTC 5957 / BAV1).